The sequence spans 236 residues: Leucyl/phenylalanyl-tRNA--protein transferase (236 aa).

Belongs to the L/F-transferase family.

It is found in the cytoplasm. It catalyses the reaction N-terminal L-lysyl-[protein] + L-leucyl-tRNA(Leu) = N-terminal L-leucyl-L-lysyl-[protein] + tRNA(Leu) + H(+). It carries out the reaction N-terminal L-arginyl-[protein] + L-leucyl-tRNA(Leu) = N-terminal L-leucyl-L-arginyl-[protein] + tRNA(Leu) + H(+). The enzyme catalyses L-phenylalanyl-tRNA(Phe) + an N-terminal L-alpha-aminoacyl-[protein] = an N-terminal L-phenylalanyl-L-alpha-aminoacyl-[protein] + tRNA(Phe). Functions in the N-end rule pathway of protein degradation where it conjugates Leu, Phe and, less efficiently, Met from aminoacyl-tRNAs to the N-termini of proteins containing an N-terminal arginine or lysine. The sequence is that of Leucyl/phenylalanyl-tRNA--protein transferase from Vibrio atlanticus (strain LGP32) (Vibrio splendidus (strain Mel32)).